The chain runs to 1095 residues: Voltage-gated inwardly rectifying potassium channel KCNH3 (1095 aa).

At 1-228 (MPAMRGLLAP…HCGALRATWD (228 aa)) the chain is on the cytoplasmic side. The 73-residue stretch at 18 to 90 (IATRFDGTHS…QQIRKALDEH (73 aa)) folds into the PAS domain. The PAC domain occupies 93–145 (FKAELILYRKSGLPFWCLLDVIPIKNEKGEVALFLVSHKDISETKNRGGPDNW). Basic and acidic residues predominate over residues 137–150 (KNRGGPDNWKERGG). Residues 137–161 (KNRGGPDNWKERGGGRRRYGRAGSK) are disordered. The helical transmembrane segment at 229-249 (GFILLATLYVAVTVPYSVCVS) threads the bilayer. At 250–259 (TAREPSAARG) the chain is on the extracellular side. A helical transmembrane segment spans residues 260 to 280 (PPSVCDLAVEVLFILDIVLNF). At 281–302 (RTTFVSKSGQVVFAPKSICLHY) the chain is on the cytoplasmic side. Residues 303-323 (VTTWFLLDVIAALPFDLLHAF) traverse the membrane as a helical segment. At 324-331 (KVNVYVGA) the chain is on the extracellular side. A helical; Voltage-sensor membrane pass occupies residues 332–352 (HLLKTVRLLRLLRLLPRLDRY). At 353 to 361 (SQYSAVVLT) the chain is on the cytoplasmic side. The chain crosses the membrane as a helical span at residues 362-382 (LLMAVFALLAHWVACVWFYIG). Residues 383 to 464 (QQEIESSESE…GGPSLRSAYI (82 aa)) lie on the Extracellular side of the membrane. The tract at residues 417-447 (PDGGNSSGQSENCSSSSSSSGSGGGRGSEAN) is disordered. A compositionally biased stretch (low complexity) spans 419-436 (GGNSSGQSENCSSSSSSS). N-linked (GlcNAc...) asparagine glycosylation is found at Asn421, Asn428, and Asn447. The pore-forming intramembrane region spans 465-485 (TSLYFALSSLTSVGFGNVSAN). A Selectivity filter motif is present at residues 476 to 481 (SVGFGN). Over 486-490 (TDTEK) the chain is Extracellular. A helical membrane pass occupies residues 491 to 511 (IFSICTMLIGALMHAVVFGNV). Topologically, residues 512–1095 (TAIIQRMYAR…QWTQEEGTGV (584 aa)) are cytoplasmic. 593–708 (LFEAASRGCL…FAPRFSRGLR (116 aa)) is a binding site for a nucleoside 3',5'-cyclic phosphate. 3 disordered regions span residues 740–823 (EEKE…LPPM), 854–883 (VGQS…PSEA), and 965–1069 (GSVL…PWDP). The segment covering 784–796 (TAPRPRLGGRGRP) has biased composition (basic residues). Residues 857–872 (SGPECSSSPSPGTESG) are compositionally biased toward low complexity. Over residues 974–991 (HPRPGQPPPLMAPWPWGP) the composition is skewed to pro residues.

Belongs to the potassium channel family. H (Eag) (TC 1.A.1.20) subfamily. Kv12.2/KCNH3 sub-subfamily. The potassium channel is probably composed of a homo- or heterotetrameric complex of pore-forming alpha subunits that can associate with modulating beta subunits. Interacts with KCNE1 and KCNE3; these interactions regulate KCNH3 trafficking to the plasma membrane and its subsequent voltage-gated potassium channel activity. N-glycosylated. N-glycosylation mediates traffick to the cell membrane but is not necessary for voltage-gated potassium channel activity. Detected in brain, but not in other tissues.

It localises to the cell membrane. The catalysed reaction is K(+)(in) = K(+)(out). Functionally, pore-forming (alpha) subunit of a voltage-gated inwardly rectifying potassium channel. Charactherized by a fast rate of activation during depolarization followed by a rapid inactivation at much more depolarized value causing inward rectification due to a C-type inactivation mechanism. Exhibits a rapid recovery from inactivation. In Mus musculus (Mouse), this protein is Voltage-gated inwardly rectifying potassium channel KCNH3.